Consider the following 437-residue polypeptide: Glutamyl-tRNA reductase (437 aa).

Residues 49–52, serine 109, 114–116, and glutamine 120 contribute to the substrate site; these read TCNR and ETQ. Cysteine 50 serves as the catalytic Nucleophile. 189–194 is a binding site for NADP(+); it reads GAGKMS.

The protein belongs to the glutamyl-tRNA reductase family. In terms of assembly, homodimer.

The enzyme catalyses (S)-4-amino-5-oxopentanoate + tRNA(Glu) + NADP(+) = L-glutamyl-tRNA(Glu) + NADPH + H(+). Its pathway is porphyrin-containing compound metabolism; protoporphyrin-IX biosynthesis; 5-aminolevulinate from L-glutamyl-tRNA(Glu): step 1/2. In terms of biological role, catalyzes the NADPH-dependent reduction of glutamyl-tRNA(Glu) to glutamate 1-semialdehyde (GSA). This is Glutamyl-tRNA reductase from Paenibacillus macerans (Bacillus macerans).